Reading from the N-terminus, the 182-residue chain is Bis(5'-nucleosyl)-tetraphosphatase [asymmetrical] (182 aa).

The 108-residue stretch at 3 to 110 (KQLYFSKFPV…IPRKKADFSE (108 aa)) folds into the HIT domain. Substrate contacts are provided by residues N28, Q84, and 90–93 (GQTV). The Histidine triad motif signature appears at 95–99 (HVHVH). The Tele-AMP-histidine intermediate role is filled by H97. Residue H99 participates in substrate binding. The segment at 135 to 161 (RYAGDERPPTSMRQAIPKDEDRKPRTL) is disordered. The span at 150–161 (IPKDEDRKPRTL) shows a compositional bias: basic and acidic residues.

It carries out the reaction P(1),P(4)-bis(5'-guanosyl) tetraphosphate + H2O = GMP + GTP + 2 H(+). Its function is as follows. Asymmetrically hydrolyzes Ap4A to yield AMP and ATP. The sequence is that of Bis(5'-nucleosyl)-tetraphosphatase [asymmetrical] (aph1) from Schizosaccharomyces pombe (strain 972 / ATCC 24843) (Fission yeast).